The following is a 483-amino-acid chain: Altronate oxidoreductase (483 aa).

NAD(+) is bound at residue isoleucine 18–alanine 29.

Belongs to the mannitol dehydrogenase family. UxaB subfamily.

The enzyme catalyses D-altronate + NAD(+) = keto-D-tagaturonate + NADH + H(+). Its pathway is carbohydrate metabolism; pentose and glucuronate interconversion. This chain is Altronate oxidoreductase, found in Klebsiella pneumoniae (strain 342).